Consider the following 116-residue polypeptide: Beta-D-galactosidase Rv1717 (116 aa).

The region spanning 40–107 (LSVYRPGGTA…TDRQALLLVT (68 aa)) is the Cupin type-2 domain.

It localises to the secreted. The protein localises to the cell wall. The enzyme catalyses Hydrolysis of terminal non-reducing beta-D-galactose residues in beta-D-galactosides.. With respect to regulation, beta-galactosidase activity is activated by Mg(2+) and significantly inhibited by Ca(2+), Cd(2+), Fe(2+), Ni(2+), Cu(2+) and Zn(2+). Inhibited by EDTA. Functionally, beta-D-galactopyranosidase that specifically recognizes the beta-glycosidic bonds formed with beta-D-galactopyranose (beta-D-Gal) or N-acetylgalactosamine (beta-D-GalNAc). May target the galactoside linkages in the exopolysaccharide component of the mycobacterial extracellular polymeric substance (EPS) and help dispersal of Mtb bacteria from a deteriorating biofilm. This is Beta-D-galactosidase Rv1717 from Mycobacterium tuberculosis (strain ATCC 25618 / H37Rv).